We begin with the raw amino-acid sequence, 287 residues long: Mitochondrial dicarboxylate carrier (287 aa).

3 Solcar repeats span residues S8 to R88, E101 to L188, and D197 to N280. 6 consecutive transmembrane segments (helical) span residues W10–L30, G63–Y82, V103–V123, G163–Y182, F203–L223, and G255–E275.

Belongs to the mitochondrial carrier (TC 2.A.29) family. In terms of tissue distribution, present in high amounts in liver and kidney, and at lower levels in all the other tissues analyzed.

The protein localises to the mitochondrion inner membrane. It catalyses the reaction (S)-malate(in) + phosphate(out) = (S)-malate(out) + phosphate(in). It carries out the reaction malonate(out) + (S)-malate(in) = malonate(in) + (S)-malate(out). The catalysed reaction is (S)-malate(in) + succinate(out) = (S)-malate(out) + succinate(in). The enzyme catalyses (S)-malate(in) + sulfate(out) = (S)-malate(out) + sulfate(in). It catalyses the reaction malonate(out) + phosphate(in) = malonate(in) + phosphate(out). It carries out the reaction succinate(out) + phosphate(in) = succinate(in) + phosphate(out). The catalysed reaction is sulfate(out) + phosphate(in) = sulfate(in) + phosphate(out). The enzyme catalyses malonate(out) + succinate(in) = malonate(in) + succinate(out). Functionally, catalyzes the electroneutral exchange or flux of physiologically important metabolites such as dicarboxylates (malonate, malate, succinate), inorganic sulfur-containing anions, and phosphate, across mitochondrial inner membrane. Plays an important role in gluconeogenesis, fatty acid metabolism, urea synthesis, and sulfur metabolism, particularly in liver, by supplying the substrates for the different metabolic processes. Regulates fatty acid release from adipocytes, and contributes to systemic insulin sensitivity. This chain is Mitochondrial dicarboxylate carrier (SLC25A10), found in Homo sapiens (Human).